The primary structure comprises 720 residues: Polyribonucleotide nucleotidyltransferase (720 aa).

Positions 485 and 491 each coordinate Mg(2+). Positions 552-615 constitute a KH domain; it reads PRIHTIKINP…EAIRRIQALT (64 aa). Positions 621-689 constitute an S1 motif domain; sequence GRIYEGKVTR…RQGRIRLSIK (69 aa). Residues 697–720 are disordered; it reads PAAESVAESAPAQEAVVEQVPMTE. A compositionally biased stretch (low complexity) spans 698 to 720; that stretch reads AAESVAESAPAQEAVVEQVPMTE.

The protein belongs to the polyribonucleotide nucleotidyltransferase family. In terms of assembly, component of the RNA degradosome, which is a multiprotein complex involved in RNA processing and mRNA degradation. Mg(2+) is required as a cofactor.

Its subcellular location is the cytoplasm. The enzyme catalyses RNA(n+1) + phosphate = RNA(n) + a ribonucleoside 5'-diphosphate. Involved in mRNA degradation. Catalyzes the phosphorolysis of single-stranded polyribonucleotides processively in the 3'- to 5'-direction. This chain is Polyribonucleotide nucleotidyltransferase, found in Tolumonas auensis (strain DSM 9187 / NBRC 110442 / TA 4).